A 112-amino-acid polypeptide reads, in one-letter code: Large ribosomal subunit protein uL22 (112 aa).

Belongs to the universal ribosomal protein uL22 family. Part of the 50S ribosomal subunit.

This protein binds specifically to 23S rRNA; its binding is stimulated by other ribosomal proteins, e.g. L4, L17, and L20. It is important during the early stages of 50S assembly. It makes multiple contacts with different domains of the 23S rRNA in the assembled 50S subunit and ribosome. In terms of biological role, the globular domain of the protein is located near the polypeptide exit tunnel on the outside of the subunit, while an extended beta-hairpin is found that lines the wall of the exit tunnel in the center of the 70S ribosome. In Mesoplasma florum (strain ATCC 33453 / NBRC 100688 / NCTC 11704 / L1) (Acholeplasma florum), this protein is Large ribosomal subunit protein uL22.